A 504-amino-acid polypeptide reads, in one-letter code: uncharacterized protein (504 aa).

It to M.thermoautotrophicum MTH1137.

This is an uncharacterized protein from Methanocaldococcus jannaschii (strain ATCC 43067 / DSM 2661 / JAL-1 / JCM 10045 / NBRC 100440) (Methanococcus jannaschii).